The primary structure comprises 1013 residues: Lysosomal alpha-mannosidase (1013 aa).

Residues 1 to 49 form the signal peptide; sequence MGTGPLTSGVRAGGGNTGWLWMSSCNLGSPVLPISFLFWLLLAAPGARA. 2 disulfides stabilise this stretch: Cys55/Cys358 and Cys268/Cys273. Zn(2+) is bound by residues His72, Asp74, and Asp196. Residue Asp196 is the Nucleophile of the active site. Residues Asn310, Asn345, and Asn367 are each glycosylated (N-linked (GlcNAc...) asparagine). A disulfide bond links Cys412 and Cys472. Residue His446 participates in Zn(2+) binding. Residues Asn489, Asn497, Asn544, Asn633, Asn646, Asn693, Asn767, and Asn931 are each glycosylated (N-linked (GlcNAc...) asparagine). A disulfide bridge connects residues Cys493 and Cys501.

Belongs to the glycosyl hydrolase 38 family. Zn(2+) is required as a cofactor.

It localises to the lysosome. It catalyses the reaction Hydrolysis of terminal, non-reducing alpha-D-mannose residues in alpha-D-mannosides.. In terms of biological role, necessary for the catabolism of N-linked carbohydrates released during glycoprotein turnover. The sequence is that of Lysosomal alpha-mannosidase (Man2b1) from Mus musculus (Mouse).